The primary structure comprises 358 residues: Guanidino acid hydrolase, mitochondrial (358 aa).

Residues methionine 1 to glutamine 36 constitute a mitochondrion transit peptide. The tract at residues cysteine 31–glutamine 56 is disordered. Residues histidine 46–glutamine 56 show a composition bias toward low complexity. Glutamine 168 and histidine 193 together coordinate Mn(2+). Lysine 199 bears the N6-acetyllysine mark. Lysine 223 carries the N6-acetyllysine; alternate modification. The residue at position 223 (lysine 223) is an N6-succinyllysine; alternate. Aspartate 284 is a Mn(2+) binding site.

It belongs to the arginase family. Agmatinase subfamily. Mn(2+) serves as cofactor. As to expression, detected only in liver.

It is found in the mitochondrion. The enzyme catalyses 3-guanidinopropanoate + H2O = urea + beta-alanine. It carries out the reaction 4-guanidinobutanoate + H2O = urea + 4-aminobutanoate. The catalysed reaction is taurocyamine + H2O = urea + taurine. It catalyses the reaction L-arginine + H2O = urea + L-ornithine. Its pathway is nitrogen metabolism; urea cycle; L-ornithine and urea from L-arginine: step 1/1. Hydrolyzes linear guanidino acids to form urea and the corresponding amines. Displays specificity for substrates having a negatively charged head group and short chains including taurocyamine, guanidino propanoic and butanoic acids. May protect cells by detoxifying potentially harmful amounts of guanidino acids. Metabolizes L-arginine with low efficiency. The polypeptide is Guanidino acid hydrolase, mitochondrial (Agmat) (Mus musculus (Mouse)).